The chain runs to 239 residues: Metallo-beta-lactamase IND-1 (239 aa).

Positions 1–20 (MKKSIRFFIVSILLSPFASA) are cleaved as a signal peptide. Zn(2+) is bound by residues His96, His98, Asp100, His159, and Cys178. Residue Lys181 participates in a beta-lactam binding. His220 contacts Zn(2+).

Belongs to the metallo-beta-lactamase superfamily. Class-B beta-lactamase family. Monomer. Zn(2+) serves as cofactor.

It is found in the periplasm. It carries out the reaction a beta-lactam + H2O = a substituted beta-amino acid. Inhibited by chelating agents such as EDTA. Not susceptible to inactivation by the beta-lactamase-blocking agent clavulanic acid. In terms of biological role, class B beta-lactamase which confers resistance to the beta-lactam antibiotics, including penicillins, cephalosporins and carbapenems. Acts via hydrolysis of the beta-lactam ring. Has penicillin-, cephalosporin- and carbapenem-hydrolyzing activities. The chain is Metallo-beta-lactamase IND-1 from Chryseobacterium indologenes (Flavobacterium indologenes).